A 131-amino-acid polypeptide reads, in one-letter code: UPF0102 protein YraN (131 aa).

It belongs to the UPF0102 family.

This chain is UPF0102 protein YraN, found in Salmonella typhi.